Consider the following 446-residue polypeptide: Exodeoxyribonuclease 7 large subunit (446 aa).

The protein belongs to the XseA family. As to quaternary structure, heterooligomer composed of large and small subunits.

The protein resides in the cytoplasm. It carries out the reaction Exonucleolytic cleavage in either 5'- to 3'- or 3'- to 5'-direction to yield nucleoside 5'-phosphates.. In terms of biological role, bidirectionally degrades single-stranded DNA into large acid-insoluble oligonucleotides, which are then degraded further into small acid-soluble oligonucleotides. The sequence is that of Exodeoxyribonuclease 7 large subunit from Xanthomonas campestris pv. campestris (strain 8004).